The primary structure comprises 245 residues: 5-oxoprolinase subunit A (245 aa).

The protein belongs to the LamB/PxpA family. Forms a complex composed of PxpA, PxpB and PxpC.

The catalysed reaction is 5-oxo-L-proline + ATP + 2 H2O = L-glutamate + ADP + phosphate + H(+). Catalyzes the cleavage of 5-oxoproline to form L-glutamate coupled to the hydrolysis of ATP to ADP and inorganic phosphate. In Yersinia enterocolitica serotype O:8 / biotype 1B (strain NCTC 13174 / 8081), this protein is 5-oxoprolinase subunit A.